We begin with the raw amino-acid sequence, 134 residues long: Arsenate reductase 2 (134 aa).

Active-site nucleophile residues include Cys11, Cys83, and Cys90. 2 disulfides stabilise this stretch: Cys11/Cys83 and Cys83/Cys90.

It belongs to the low molecular weight phosphotyrosine protein phosphatase family. Thioredoxin-coupled ArsC subfamily.

The protein resides in the cytoplasm. It carries out the reaction arsenate + [thioredoxin]-dithiol + H(+) = arsenite + [thioredoxin]-disulfide + H2O. In terms of biological role, catalyzes the reduction of arsenate [As(V)] to arsenite [As(III)]. This is Arsenate reductase 2 from Bacillus cereus (strain ATCC 10987 / NRS 248).